Reading from the N-terminus, the 5255-residue chain is Bacitracin synthase 1 (5255 aa).

A domain 1 (isoleucine-activating) region spans residues 39–612; it reads LHELFEEQAM…IKELSAFIEA (574 aa). Basic and acidic residues predominate over residues 519–531; that stretch reads VDRKALPEPDRTA. The segment at 519–542 is disordered; that stretch reads VDRKALPEPDRTAGAENEYEAPRN. One can recognise a Carrier 1 domain in the interval 539-614; that stretch reads APRNETEEKL…ELSAFIEANH (76 aa). Serine 574 is subject to O-(pantetheine 4'-phosphoryl)serine. The segment at 621 to 1037 is cyclization; the sequence is TLVTRAADPE…ITWDYVEQIF (417 aa). The interval 1109–1648 is domain 2 (cysteine-activating); sequence HHDEVMTYQE…FKNDTIIALD (540 aa). Carrier domains follow at residues 1580–1655, 2616–2691, 3659–3733, and 5166–5241; these read LPEN…KNRE, APRD…VRRR, PPRN…TEET, and APRN…LTAE. O-(pantetheine 4'-phosphoryl)serine is present on residues serine 1615, serine 2651, serine 3694, and serine 5201. Residues 2124–2689 are domain 3 (leucine-activating); that stretch reads GKAIHQLFEE…IKGLRDISVR (566 aa). The segment at 3164 to 3732 is domain 4 (glutamine-activating); it reads DHPAVAFGDE…KDLSRFITEE (569 aa). The domain 5 (isoleucine-activating) stretch occupies residues 4668 to 5249; the sequence is LHELFEEQAM…AEAESAVSEE (582 aa).

Belongs to the ATP-dependent AMP-binding enzyme family. Large multienzyme complex of BA1, BA2 and BA3. Pantetheine 4'-phosphate is required as a cofactor.

The enzyme catalyses L-glutamate = D-glutamate. It participates in antibiotic biosynthesis; bacitracin biosynthesis. Functionally, activates five amino acids, incorporates two D-amino acids, releases and cyclizes the mature bacitracin. This is Bacitracin synthase 1 (bacA) from Bacillus licheniformis.